Here is a 127-residue protein sequence, read N- to C-terminus: UPF0325 protein VS_2356 (127 aa).

This sequence belongs to the UPF0325 family.

The protein is UPF0325 protein VS_2356 of Vibrio atlanticus (strain LGP32) (Vibrio splendidus (strain Mel32)).